Consider the following 310-residue polypeptide: Putative HTH-type transcriptional regulatory protein M1425_1284 (310 aa).

One can recognise an HTH cro/C1-type domain in the interval 125-180; it reads LKHKREEMGYSIGDVAKFLGVSRKAIYDYEKGDSDVSLEVAEKLIDLFGDDIIGDV. The segment at residues 136 to 155 is a DNA-binding region (H-T-H motif); it reads IGDVAKFLGVSRKAIYDYEK.

This is Putative HTH-type transcriptional regulatory protein M1425_1284 from Saccharolobus islandicus (strain M.14.25 / Kamchatka #1) (Sulfolobus islandicus).